A 316-amino-acid polypeptide reads, in one-letter code: 1-aminocyclopropane-1-carboxylate oxidase 4 (316 aa).

A Fe2OG dioxygenase domain is found at 153 to 253; it reads PNFGTKVSNY…RMSLASFYNP (101 aa). Fe cation contacts are provided by H177, D179, and H234.

It belongs to the iron/ascorbate-dependent oxidoreductase family. Requires Fe cation as cofactor. Expressed in all of the floral organs examined apart from the sepals.

The enzyme catalyses 1-aminocyclopropane-1-carboxylate + L-ascorbate + O2 = ethene + L-dehydroascorbate + hydrogen cyanide + CO2 + 2 H2O. Its pathway is alkene biosynthesis; ethylene biosynthesis via S-adenosyl-L-methionine; ethylene from S-adenosyl-L-methionine: step 2/2. The sequence is that of 1-aminocyclopropane-1-carboxylate oxidase 4 (ACO4) from Solanum lycopersicum (Tomato).